The chain runs to 199 residues: Guanylyl cyclase-activating protein 1 (199 aa).

G2 carries N-myristoyl glycine lipidation. Position 3 is a deamidated asparagine (N3). EF-hand domains are found at residues 13–48 (SATE…KNLS), 50–85 (SANK…VLKG), 86–121 (KVDQ…IRAI), and 129–164 (TAEE…DEVL). Residues D63, N65, D67, Y69, E74, D99, D101, N103, C105, E110, D142, N144, D146, E148, and E153 each coordinate Ca(2+).

Retina, in rod and cone outer segments, and pineal gland.

Its function is as follows. Stimulates retinal guanylyl cyclase when free calcium ions concentration is low and inhibits guanylyl cyclase when free calcium ions concentration is elevated. This Ca(2+)-sensitive regulation of retinal guanylyl cyclase is a key event in recovery of the dark state of rod photoreceptors following light exposure. The polypeptide is Guanylyl cyclase-activating protein 1 (GUCA1A) (Gallus gallus (Chicken)).